The chain runs to 342 residues: Glycerol-1-phosphate dehydrogenase [NAD(P)+] (342 aa).

NAD(+) contacts are provided by residues 84–88 (GRPID) and 106–109 (TAAS). Residue Asp111 coordinates substrate. An NAD(+)-binding site is contributed by Ser115. Position 160 (Asp160) interacts with substrate. Residues Asp160 and His241 each coordinate Zn(2+). Residue His245 participates in substrate binding. His260 contributes to the Zn(2+) binding site.

Belongs to the glycerol-1-phosphate dehydrogenase family. In terms of assembly, homodimer. Zn(2+) serves as cofactor.

It is found in the cytoplasm. It carries out the reaction sn-glycerol 1-phosphate + NAD(+) = dihydroxyacetone phosphate + NADH + H(+). The enzyme catalyses sn-glycerol 1-phosphate + NADP(+) = dihydroxyacetone phosphate + NADPH + H(+). It functions in the pathway membrane lipid metabolism; glycerophospholipid metabolism. In terms of biological role, catalyzes the NAD(P)H-dependent reduction of dihydroxyacetonephosphate (DHAP or glycerone phosphate) to glycerol 1-phosphate (G1P). The G1P thus generated is used as the glycerophosphate backbone of phospholipids in the cellular membranes of Archaea. The protein is Glycerol-1-phosphate dehydrogenase [NAD(P)+] of Pyrobaculum aerophilum (strain ATCC 51768 / DSM 7523 / JCM 9630 / CIP 104966 / NBRC 100827 / IM2).